The sequence spans 234 residues: UstYa family oxidase phomYd' (234 aa).

The tract at residues 1–26 (MEKFFSPSRHNYADLSPTDVPASEES) is disordered. Residues 47–69 (VLVNRLLAASTVALVMVSLWLGW) form a helical membrane-spanning segment. Residues 151-155 (HWDHC) carry the HXXHC 1 motif. N-linked (GlcNAc...) asparagine glycosylation is present at Asn208.

It belongs to the ustYa family.

Its subcellular location is the membrane. It participates in mycotoxin biosynthesis. Its function is as follows. UstYa family oxidase; part of the gene cluster that mediates the biosynthesis of the phomopsins, a group of hexapeptide mycotoxins which infects lupins and causes lupinosis disease in livestock. Within the pathway, phomYd' catalyzes the desaturation of the Asp moiety into 2,3-dehydroaspartic acid (dAsp). The pathway starts with the processing of the precursor phomA' by several endopeptidases including kexin proteases as well as the cluster-specific S41 family peptidase phomP1 and the oligopeptidase phomG' to produce 10 identical copies of the hexapeptide Tyr-Val-Ile-Pro-Ile-Asp. After being excised from the precursor peptide, the core peptides are cyclized and modified post-translationally by enzymes encoded within the gene cluster. The timing and order of proteolysis of the phomA' precursor and PTMs are still unknown. Two tyrosinase-like enzymes, phomQ1' and phomQ2, catalyze the chlorination and hydroxylation of Tyr, respectively. PhomYb, is proposed to be involved in the construction of the macrocyclic structure. The other 4 ustYa family proteins may be involved in PTMs that generate the unique structure of phomopsin A. PhomYa' is required for the hydroxylation of C-beta of Tyr. PhomYc', phomYd', and phomYe are responsible for the biosynthesis of 2,3-dehydroisoleucine (dIle), 2,3-dehydroaspartic acid (dAsp), and 3,4-dehydroproline (dPro), respectively. While dIle formation by phomYc' is indispensable for the installation of dAsp by phomYd', the order of the other PTMs have not been elucidated yet. Most of the biosynthetic enzymes likely have broad substrate specificity, and thus, there might be a metabolic grid from a precursor to phomopsin A. The enzyme(s) responsible for the biosynthesis of 3,4-dehydrovaline (dVal) have also not been identified yet. Finally, phomM' acts as an S-adenosylmethionine-dependent alpha-N-methyltransferase that catalyzes two successive N-methylation reactions, converting N-desmethyl-phomopsin A to phomopsin A and phomopsin A further to an N,N-dimethylated congener called phomopsin E. The chain is UstYa family oxidase phomYd' from Diaporthe leptostromiformis (Lupinosis disease fungus).